The following is a 243-amino-acid chain: Large ribosomal subunit protein uL2 (243 aa).

The interval 202–243 is disordered; it reads HGGGRHQHVGQSSTVSRNAPPGAKVGSIAARKTGRAKIKDRR. A compositionally biased stretch (basic residues) spans 233-243; that stretch reads KTGRAKIKDRR.

The protein belongs to the universal ribosomal protein uL2 family. Part of the 50S ribosomal subunit. Forms a bridge to the 30S subunit in the 70S ribosome.

Functionally, one of the primary rRNA binding proteins. Required for association of the 30S and 50S subunits to form the 70S ribosome, for tRNA binding and peptide bond formation. It has been suggested to have peptidyltransferase activity; this is somewhat controversial. Makes several contacts with the 16S rRNA in the 70S ribosome. This is Large ribosomal subunit protein uL2 from Cenarchaeum symbiosum (strain A).